Consider the following 353-residue polypeptide: 4-hydroxy-3-methylbut-2-en-1-yl diphosphate synthase (flavodoxin) (353 aa).

Residues Cys268, Cys271, Cys303, and Glu310 each contribute to the [4Fe-4S] cluster site.

This sequence belongs to the IspG family. The cofactor is [4Fe-4S] cluster.

The enzyme catalyses (2E)-4-hydroxy-3-methylbut-2-enyl diphosphate + oxidized [flavodoxin] + H2O + 2 H(+) = 2-C-methyl-D-erythritol 2,4-cyclic diphosphate + reduced [flavodoxin]. Its pathway is isoprenoid biosynthesis; isopentenyl diphosphate biosynthesis via DXP pathway; isopentenyl diphosphate from 1-deoxy-D-xylulose 5-phosphate: step 5/6. Converts 2C-methyl-D-erythritol 2,4-cyclodiphosphate (ME-2,4cPP) into 1-hydroxy-2-methyl-2-(E)-butenyl 4-diphosphate. The chain is 4-hydroxy-3-methylbut-2-en-1-yl diphosphate synthase (flavodoxin) from Ruminiclostridium cellulolyticum (strain ATCC 35319 / DSM 5812 / JCM 6584 / H10) (Clostridium cellulolyticum).